We begin with the raw amino-acid sequence, 398 residues long: MLPMSDTRSSRIKPMTLNFGPQHPAAHGVMRLILEMSGEVIERIDPHIGLLHRGTEKLIEYKTYLQALPYFDRLDYVSPMSQEHAYSLCVEKLLQCVVPPRAKYIRVIFCELTRVLNHLLNVSSQALDTGATTPLLWMFEERERLLSFYERASGARFHAAYIRPGGIAADVPDGLLDDIHAFTESFPKLLDDVDGLLTENSIWKQRNVDIGVVSKAQALDWGFSGPMLRACGIPWDLRKSQPYEIYETLDFKVPVGSNGDCYDRYLVRMAEMRESISIIRQCLNGIPEGPVKTDDRKIAPPRREELKYSMEALIHHFKLFSEGYKVPEGEAYVAVEAPKGEFGVYIVSDGTNRPYRCRIRAPGFAHLQAIDAMARGHMLADLTAIIGSLDIVFGEIDR.

This sequence belongs to the complex I 49 kDa subunit family. NDH-1 is composed of 14 different subunits. Subunits NuoB, C, D, E, F, and G constitute the peripheral sector of the complex.

The protein localises to the cell inner membrane. The catalysed reaction is a quinone + NADH + 5 H(+)(in) = a quinol + NAD(+) + 4 H(+)(out). Its function is as follows. NDH-1 shuttles electrons from NADH, via FMN and iron-sulfur (Fe-S) centers, to quinones in the respiratory chain. The immediate electron acceptor for the enzyme in this species is believed to be ubiquinone. Couples the redox reaction to proton translocation (for every two electrons transferred, four hydrogen ions are translocated across the cytoplasmic membrane), and thus conserves the redox energy in a proton gradient. In Anaplasma marginale (strain St. Maries), this protein is NADH-quinone oxidoreductase subunit D.